We begin with the raw amino-acid sequence, 385 residues long: 8-amino-7-oxononanoate synthase (385 aa).

Residue R21 participates in substrate binding. Position 108–109 (108–109 (GF)) interacts with pyridoxal 5'-phosphate. H133 serves as a coordination point for substrate. The pyridoxal 5'-phosphate site is built by S179, H207, and T233. K236 carries the post-translational modification N6-(pyridoxal phosphate)lysine. Residue T352 participates in substrate binding.

This sequence belongs to the class-II pyridoxal-phosphate-dependent aminotransferase family. BioF subfamily. In terms of assembly, homodimer. The cofactor is pyridoxal 5'-phosphate.

The enzyme catalyses 6-carboxyhexanoyl-[ACP] + L-alanine + H(+) = (8S)-8-amino-7-oxononanoate + holo-[ACP] + CO2. The protein operates within cofactor biosynthesis; biotin biosynthesis. Catalyzes the decarboxylative condensation of pimeloyl-[acyl-carrier protein] and L-alanine to produce 8-amino-7-oxononanoate (AON), [acyl-carrier protein], and carbon dioxide. The polypeptide is 8-amino-7-oxononanoate synthase (Salmonella paratyphi B (strain ATCC BAA-1250 / SPB7)).